The following is a 618-amino-acid chain: UvrABC system protein C (618 aa).

A GIY-YIG domain is found at 19–97 (SEPGIYRMLD…IKALRPKYNV (79 aa)). The UVR domain occupies 208-243 (QIILDELAERMKNAVSQLNFEEAAVLRDQIKNLRLI).

It belongs to the UvrC family. In terms of assembly, interacts with UvrB in an incision complex.

It is found in the cytoplasm. Its function is as follows. The UvrABC repair system catalyzes the recognition and processing of DNA lesions. UvrC both incises the 5' and 3' sides of the lesion. The N-terminal half is responsible for the 3' incision and the C-terminal half is responsible for the 5' incision. This Legionella pneumophila (strain Lens) protein is UvrABC system protein C.